Reading from the N-terminus, the 523-residue chain is Lysine-specific demethylase 4D (523 aa).

Positions 18–60 (IMIFHPTKEEFNDFDKYIAYMESQGAHRAGLAKIIPPKEWKAR) constitute a JmjN domain. PolyADP-ribosyl glutamic acid occurs at positions 26 and 27. Tyr-136 serves as a coordination point for 2-oxoglutarate. One can recognise a JmjC domain in the interval 146 to 312 (DENTKQWNLG…YGKMASQCSC (167 aa)). 2 residues coordinate Fe cation: His-192 and Glu-194. Residues Asn-202 and Lys-210 each contribute to the 2-oxoglutarate site. Zn(2+) contacts are provided by Cys-238 and His-244. Position 245 (Lys-245) interacts with 2-oxoglutarate. His-280 serves as a coordination point for Fe cation. Zn(2+)-binding residues include Cys-310 and Cys-312. The tract at residues 407–523 (RRSAVSGTAT…ASGCSWAPVP (117 aa)) is disordered. Residues 428–440 (KPSSTPSSTPGPS) show a composition bias toward low complexity. The span at 448–458 (NGRRGRGRPPQ) shows a compositional bias: basic residues.

The protein belongs to the JHDM3 histone demethylase family. It depends on Fe(2+) as a cofactor. In terms of processing, ubiquitinated via 'Lys-63'-linked ubiquitin chains. Deubiquitinated by USP14 with the help of TRIM14 leading to stabilization.

Its subcellular location is the nucleus. It carries out the reaction N(6),N(6),N(6)-trimethyl-L-lysyl(9)-[histone H3] + 2 2-oxoglutarate + 2 O2 = N(6)-methyl-L-lysyl(9)-[histone H3] + 2 formaldehyde + 2 succinate + 2 CO2. Functionally, histone demethylase that specifically demethylates 'Lys-9' of histone H3, thereby playing a central role in histone code. Does not demethylate histone H3 'Lys-4', H3 'Lys-27', H3 'Lys-36' nor H4 'Lys-20'. Demethylates both di- and trimethylated H3 'Lys-9' residue, while it has no activity on monomethylated residues. Demethylation of Lys residue generates formaldehyde and succinate. This Homo sapiens (Human) protein is Lysine-specific demethylase 4D (KDM4D).